Consider the following 186-residue polypeptide: Ribosome-recycling factor (186 aa).

This sequence belongs to the RRF family.

It is found in the cytoplasm. Its function is as follows. Responsible for the release of ribosomes from messenger RNA at the termination of protein biosynthesis. May increase the efficiency of translation by recycling ribosomes from one round of translation to another. This chain is Ribosome-recycling factor, found in Bacteroides thetaiotaomicron (strain ATCC 29148 / DSM 2079 / JCM 5827 / CCUG 10774 / NCTC 10582 / VPI-5482 / E50).